A 557-amino-acid chain; its full sequence is Hepatocyte nuclear factor 1-beta (557 aa).

The interval 1–31 is dimerization; the sequence is MVSKLTSLQQELLSALLSSGVTKEVLIQALE. One can recognise an HNF-p1 domain in the interval 1-32; the sequence is MVSKLTSLQQELLSALLSSGVTKEVLIQALEE. Phosphoserine is present on residues Ser-49, Ser-52, Ser-75, and Ser-80. Positions 66–85 are disordered; sequence TNGHAKGRLSGDEGSEDGDD. The POU-specific atypical domain maps to 93–188; the sequence is KELQALNTEE…ILRQFNQTVQ (96 aa). Positions 231-311 form a DNA-binding region, homeobox; HNF1-type; that stretch reads MRRNRFKWGP…NRRKEEAFRQ (81 aa). The interval 324–370 is disordered; that stretch reads HNLNPLLTHGSPHHQPSSSPPNKLSGVRYSQPGNNEVTSSSTISHHG. The segment covering 354–370 has biased composition (polar residues); sequence QPGNNEVTSSSTISHHG.

This sequence belongs to the HNF1 homeobox family. Binds DNA as a dimer. Can form homodimer or heterodimer with HNF1-alpha. Interacts (via HNF-p1 domain) with PCBD1; the interaction increases its transactivation activity. Liver, kidney and intestine.

It is found in the nucleus. Functionally, transcription factor that binds to the inverted palindrome 5'-GTTAATNATTAAC-3'. Binds to the FPC element in the cAMP regulatory unit of the PLAU gene. Transcriptional activity is increased by coactivator PCBD1. The chain is Hepatocyte nuclear factor 1-beta (Hnf1b) from Rattus norvegicus (Rat).